A 136-amino-acid chain; its full sequence is Histone H3.3 (136 aa).

The disordered stretch occupies residues 1–41; sequence MARTKQTARKSTGVKAPRKQLATKAARKSAPVSGGVKKPHK.

Belongs to the histone H3 family. As to quaternary structure, the nucleosome is a histone octamer containing two molecules each of H2A, H2B, H3 and H4 assembled in one H3-H4 heterotetramer and two H2A-H2B heterodimers. The octamer wraps approximately 147 bp of DNA. In terms of processing, acetylated. Acetylation occurs almost exclusively in the MAC.

The protein resides in the nucleus. It is found in the chromosome. Macronuclear replacement variant which replaces conventional H3 in a subset of nucleosomes. Nucleosomes wrap and compact DNA into chromatin, limiting DNA accessibility to the cellular machineries which require DNA as a template. Histones thereby play a central role in transcription regulation, DNA repair, DNA replication and chromosomal stability. DNA accessibility is regulated via a complex set of post-translational modifications of histones, also called histone code, and nucleosome remodeling. Functions redundantly to H3.4. H3.3 deposition into chromatin is mainly transcription-associated and DNA replication-independent, but it can also enter a replication-coupled pathway. Although not essential for vegetative growth, minor H3 variants are required for producing viable conjugation progeny by affecting late developmental stages of conjugation. The chain is Histone H3.3 from Tetrahymena pyriformis.